The following is a 177-amino-acid chain: Alpha-crystallin A chain (177 aa).

M1 is subject to N-acetylmethionine. In terms of domain architecture, sHSP spans 52–162; sequence VFRNFLDSGI…NWQDRPIPVS (111 aa). H100 and E102 together coordinate Zn(2+). Residues C131 and C142 are joined by a disulfide bond. The disordered stretch occupies residues 146–177; it reads TRPGDDSNWQDRPIPVSREEKQGTQPEIRADP. The O-linked (GlcNAc) serine glycan is linked to S162. Residues 162–177 are compositionally biased toward basic and acidic residues; it reads SREEKQGTQPEIRADP.

It belongs to the small heat shock protein (HSP20) family. As to quaternary structure, heteropolymer composed of three CRYAA and one CRYAB subunits. Inter-subunit bridging via zinc ions enhances stability, which is crucial as there is no protein turn over in the lens. Can also form homodimers and homotetramers (dimers of dimers) which serve as the building blocks of homooligomers.

The protein localises to the cytoplasm. It is found in the nucleus. Functionally, contributes to the transparency and refractive index of the lens. May act as a chaperone, preventing aggregation of various proteins under a wide range of stress conditions. This is Alpha-crystallin A chain (cryaa) from Squalus acanthias (Spiny dogfish).